A 176-amino-acid chain; its full sequence is NAD(P)H-quinone oxidoreductase subunit 6, chloroplastic (176 aa).

A run of 5 helical transmembrane segments spans residues 10 to 30 (FLLV…VLLT), 32 to 52 (PIFS…FYIL), 63 to 83 (LLIY…FMNS), 92 to 112 (LWTV…VSLV), and 152 to 172 (FFLP…GTIV).

It belongs to the complex I subunit 6 family. NDH is composed of at least 16 different subunits, 5 of which are encoded in the nucleus.

It is found in the plastid. The protein resides in the chloroplast thylakoid membrane. It catalyses the reaction a plastoquinone + NADH + (n+1) H(+)(in) = a plastoquinol + NAD(+) + n H(+)(out). It carries out the reaction a plastoquinone + NADPH + (n+1) H(+)(in) = a plastoquinol + NADP(+) + n H(+)(out). NDH shuttles electrons from NAD(P)H:plastoquinone, via FMN and iron-sulfur (Fe-S) centers, to quinones in the photosynthetic chain and possibly in a chloroplast respiratory chain. The immediate electron acceptor for the enzyme in this species is believed to be plastoquinone. Couples the redox reaction to proton translocation, and thus conserves the redox energy in a proton gradient. In Cicer arietinum (Chickpea), this protein is NAD(P)H-quinone oxidoreductase subunit 6, chloroplastic (ndhG).